A 252-amino-acid polypeptide reads, in one-letter code: Imidazole glycerol phosphate synthase subunit HisF (252 aa).

Residues aspartate 11 and aspartate 130 contribute to the active site.

Belongs to the HisA/HisF family. As to quaternary structure, heterodimer of HisH and HisF.

Its subcellular location is the cytoplasm. It catalyses the reaction 5-[(5-phospho-1-deoxy-D-ribulos-1-ylimino)methylamino]-1-(5-phospho-beta-D-ribosyl)imidazole-4-carboxamide + L-glutamine = D-erythro-1-(imidazol-4-yl)glycerol 3-phosphate + 5-amino-1-(5-phospho-beta-D-ribosyl)imidazole-4-carboxamide + L-glutamate + H(+). The protein operates within amino-acid biosynthesis; L-histidine biosynthesis; L-histidine from 5-phospho-alpha-D-ribose 1-diphosphate: step 5/9. Functionally, IGPS catalyzes the conversion of PRFAR and glutamine to IGP, AICAR and glutamate. The HisF subunit catalyzes the cyclization activity that produces IGP and AICAR from PRFAR using the ammonia provided by the HisH subunit. This chain is Imidazole glycerol phosphate synthase subunit HisF, found in Sulfurihydrogenibium sp. (strain YO3AOP1).